The chain runs to 630 residues: tRNA uridine 5-carboxymethylaminomethyl modification enzyme MnmG (630 aa).

FAD is bound at residue 13-18 (GGGHAG). Residue 273 to 287 (GPRYCPSIEDKIHRF) participates in NAD(+) binding.

This sequence belongs to the MnmG family. In terms of assembly, homodimer. Heterotetramer of two MnmE and two MnmG subunits. FAD serves as cofactor.

Its subcellular location is the cytoplasm. In terms of biological role, NAD-binding protein involved in the addition of a carboxymethylaminomethyl (cmnm) group at the wobble position (U34) of certain tRNAs, forming tRNA-cmnm(5)s(2)U34. The chain is tRNA uridine 5-carboxymethylaminomethyl modification enzyme MnmG from Pseudomonas putida (strain GB-1).